Consider the following 464-residue polypeptide: Sushi repeat-containing protein SRPX (464 aa).

The first 30 residues, 1 to 30 (MGSPAHRPALLLLLPPLLLLLLLRVPPSRS), serve as a signal peptide directing secretion. S34 is a glycosylation site (O-linked (Xyl...) (chondroitin sulfate) serine). Intrachain disulfides connect C57–C85, C69–C103, C89–C115, C120–C161, and C147–C174. 2 consecutive Sushi domains span residues 57 to 117 (CSPI…ICKQ) and 118 to 176 (KRCP…SCVD). Residues 177 to 259 (MEPPRIKCPS…TCKFRVKVRV (83 aa)) form the HYR domain. The region spanning 260–319 (KRCGKLNAPENGYMKCSSDGDNYGATCEFSCIGGYELQGSPARVCQSNLAWSGTEPTCAA) is the Sushi 3 domain. Intrachain disulfides connect C262/C304 and C290/C317.

As to expression, detected in fibroblasts (at protein level). Retina and heart; less in placenta, pancreas, lung, liver, skeletal muscle, kidney and brain.

The protein localises to the cell surface. In terms of biological role, may be involved in phagocytosis during disk shedding, cell adhesion to cells other than the pigment epithelium or signal transduction. The sequence is that of Sushi repeat-containing protein SRPX (SRPX) from Homo sapiens (Human).